A 101-amino-acid polypeptide reads, in one-letter code: MIPGELFPETGDIELNAGRATVKVAVANTGDRPVQVGSHFHFYEVNPALAFDRAQVKGMRLDIPAGTAVRFEPGDQREVTLVPLVGQRQVFGFNGKIQGAL.

Belongs to the urease beta subunit family. In terms of assembly, heterotrimer of UreA (gamma), UreB (beta) and UreC (alpha) subunits. Three heterotrimers associate to form the active enzyme.

The protein localises to the cytoplasm. The catalysed reaction is urea + 2 H2O + H(+) = hydrogencarbonate + 2 NH4(+). The protein operates within nitrogen metabolism; urea degradation; CO(2) and NH(3) from urea (urease route): step 1/1. The protein is Urease subunit beta of Acaryochloris marina (strain MBIC 11017).